Consider the following 420-residue polypeptide: WD repeat-containing protein jip5 (420 aa).

6 WD repeats span residues 9–48 (PLSADLFSQALHPKEPVVSVGLSSGHVQTFRLPSDEVDSD), 72–111 (RHKGSCRCLGFGVDGEMLYSAGTDGLVKAAKAETGVVENK), 117–158 (DKNG…SKVS), 221–262 (VSSV…DQDE), 271–314 (GGGE…VVSE), and 318–355 (DETEGVVGLGFDVEGRMVSGGGQIVKVWHEAVDSGDGV). Positions 39-63 (RLPSDEVDSDDDGASTSSSRTGRGH) are disordered. The disordered stretch occupies residues 350 to 420 (DSGDGVNGNE…QAVMAFHDLD (71 aa)). A compositionally biased stretch (acidic residues) spans 368–387 (DDSDEDSDDGDDDDDSGDSD). Positions 394–406 (DARKKRKKGKTPK) are enriched in basic residues.

Belongs to the WD repeat WDR55 family.

Its subcellular location is the nucleus. The protein resides in the nucleolus. The chain is WD repeat-containing protein jip5 (jip5) from Aspergillus terreus (strain NIH 2624 / FGSC A1156).